The chain runs to 4307 residues: Cytoplasmic dynein 2 heavy chain 1 (4307 aa).

The stem stretch occupies residues methionine 1–glutamine 1650. Residue leucine 145 to serine 152 coordinates ATP. The stretch at asparagine 1074 to aspartate 1103 forms a coiled coil. AAA regions lie at residues tyrosine 1651–glycine 1875, glutamate 1938–aspartate 2161, alanine 2251–glycine 2505, and histidine 2617–lysine 2863. Residues glycine 1689–threonine 1696, glycine 1979–serine 1986, glycine 2291–glycine 2298, and glycine 2655–arginine 2662 each bind ATP. The interval alanine 2881–isoleucine 3169 is stalk. 3 coiled-coil regions span residues leucine 2897–glutamine 2982, leucine 3109–leucine 3200, and isoleucine 3408–glutamate 3442. 2 AAA regions span residues leucine 3244–glutamate 3473 and methionine 3690–arginine 3905.

Belongs to the dynein heavy chain family. In terms of assembly, the cytoplasmic dynein complex 2 is probably composed by a heavy chain DYNC2H1 homodimer and a number of DYNC2LI1 light intermediate chains.

It localises to the cytoplasm. Its subcellular location is the cytoskeleton. The protein localises to the cilium axoneme. The protein resides in the cell membrane. Functionally, may function as a motor for intraflagellar retrograde transport. Functions in cilia biogenesis. May play a role in transport between endoplasmic reticulum and Golgi or organization of the Golgi in cells. The protein is Cytoplasmic dynein 2 heavy chain 1 (DYNC2H1) of Homo sapiens (Human).